The primary structure comprises 94 residues: MAGPKRFNKDKRPKRNTQSLLFKRKRFCRFTAAGVEEIDYKDIDTLRDFVAENGKIIPARLTGTRAIFQRQINTAVKRARFLAMLPYSDQHRSL.

The protein belongs to the bacterial ribosomal protein bS18 family. As to quaternary structure, part of the 30S ribosomal subunit. Forms a tight heterodimer with protein bS6.

In terms of biological role, binds as a heterodimer with protein bS6 to the central domain of the 16S rRNA, where it helps stabilize the platform of the 30S subunit. The polypeptide is Small ribosomal subunit protein bS18 (Polaromonas sp. (strain JS666 / ATCC BAA-500)).